Reading from the N-terminus, the 243-residue chain is 1-(5-phosphoribosyl)-5-[(5-phosphoribosylamino)methylideneamino] imidazole-4-carboxamide isomerase (243 aa).

Catalysis depends on D8, which acts as the Proton acceptor. D129 acts as the Proton donor in catalysis.

It belongs to the HisA/HisF family.

The protein localises to the cytoplasm. It catalyses the reaction 1-(5-phospho-beta-D-ribosyl)-5-[(5-phospho-beta-D-ribosylamino)methylideneamino]imidazole-4-carboxamide = 5-[(5-phospho-1-deoxy-D-ribulos-1-ylimino)methylamino]-1-(5-phospho-beta-D-ribosyl)imidazole-4-carboxamide. It participates in amino-acid biosynthesis; L-histidine biosynthesis; L-histidine from 5-phospho-alpha-D-ribose 1-diphosphate: step 4/9. This is 1-(5-phosphoribosyl)-5-[(5-phosphoribosylamino)methylideneamino] imidazole-4-carboxamide isomerase from Syntrophotalea carbinolica (strain DSM 2380 / NBRC 103641 / GraBd1) (Pelobacter carbinolicus).